The sequence spans 374 residues: Biotin synthase (374 aa).

Residues 51–278 form the Radical SAM core domain; it reads NTVKVNYLVN…DTEIRIAGGR (228 aa). Residues Cys66, Cys70, and Cys73 each contribute to the [4Fe-4S] cluster site. Positions 110, 143, 203, and 273 each coordinate [2Fe-2S] cluster. A disordered region spans residues 346–374; sequence IAGGTSVAGSAPDPAIRRRGAGTDVPANA.

Belongs to the radical SAM superfamily. Biotin synthase family. As to quaternary structure, homodimer. Requires [4Fe-4S] cluster as cofactor. [2Fe-2S] cluster is required as a cofactor.

The enzyme catalyses (4R,5S)-dethiobiotin + (sulfur carrier)-SH + 2 reduced [2Fe-2S]-[ferredoxin] + 2 S-adenosyl-L-methionine = (sulfur carrier)-H + biotin + 2 5'-deoxyadenosine + 2 L-methionine + 2 oxidized [2Fe-2S]-[ferredoxin]. The protein operates within cofactor biosynthesis; biotin biosynthesis; biotin from 7,8-diaminononanoate: step 2/2. In terms of biological role, catalyzes the conversion of dethiobiotin (DTB) to biotin by the insertion of a sulfur atom into dethiobiotin via a radical-based mechanism. The chain is Biotin synthase from Nocardioides sp. (strain ATCC BAA-499 / JS614).